We begin with the raw amino-acid sequence, 226 residues long: UPF0502 protein Daci_5373 (226 aa).

The protein belongs to the UPF0502 family.

This Delftia acidovorans (strain DSM 14801 / SPH-1) protein is UPF0502 protein Daci_5373.